The primary structure comprises 142 residues: NTF2-related export protein 2 (142 aa).

An NTF2 domain is found at 17 to 136; that stretch reads AAEEFVNIYY…WKIASDCFRF (120 aa).

As to quaternary structure, associates with NXF1, NXF2, NXF3 and NXF5.

The protein resides in the nucleus. Its subcellular location is the cytoplasm. Its function is as follows. Regulator of protein export for NES-containing proteins. Also plays a role in mRNA nuclear export. This Mus musculus (Mouse) protein is NTF2-related export protein 2 (Nxt2).